A 677-amino-acid chain; its full sequence is Fermitin family homolog 1 (677 aa).

Residues 96-653 (MLRLRLPNAK…HEYIGGYIFL (558 aa)) enclose the FERM domain. The segment at 157–181 (KEPVIEDILNLESSSTSSGSPVSPG) is disordered. Positions 169-181 (SSSTSSGSPVSPG) are enriched in low complexity. A phosphoserine mark is found at Ser170 and Ser179. Positions 377–473 (KLFRPKKLML…WMAACILASK (97 aa)) constitute a PH domain.

Belongs to the kindlin family. In terms of assembly, interacts with the cytoplasmic domain of integrins ITGB1 and ITGB3.

Its subcellular location is the cytoplasm. The protein localises to the cytoskeleton. It localises to the cell junction. The protein resides in the focal adhesion. It is found in the cell projection. Its subcellular location is the ruffle membrane. Involved in cell adhesion. Contributes to integrin activation. When coexpressed with talin, potentiates activation of ITGA2B. Required for normal keratinocyte proliferation. Required for normal polarization of basal keratinocytes in skin, and for normal cell shape. Required for normal adhesion of keratinocytes to fibronectin and laminin, and for normal keratinocyte migration to wound sites. This chain is Fermitin family homolog 1 (Fermt1), found in Mus musculus (Mouse).